Consider the following 202-residue polypeptide: Dephospho-CoA kinase (202 aa).

Positions 6–202 (KISVTGDPSS…QCFKALKGTI (197 aa)) constitute a DPCK domain. 14–19 (SSGKTE) serves as a coordination point for ATP.

It belongs to the CoaE family.

The protein resides in the cytoplasm. It catalyses the reaction 3'-dephospho-CoA + ATP = ADP + CoA + H(+). Its pathway is cofactor biosynthesis; coenzyme A biosynthesis; CoA from (R)-pantothenate: step 5/5. Functionally, catalyzes the phosphorylation of the 3'-hydroxyl group of dephosphocoenzyme A to form coenzyme A. The polypeptide is Dephospho-CoA kinase (Chlamydia trachomatis serovar D (strain ATCC VR-885 / DSM 19411 / UW-3/Cx)).